Here is a 304-residue protein sequence, read N- to C-terminus: ATP synthase gamma chain (304 aa).

This sequence belongs to the ATPase gamma chain family. F-type ATPases have 2 components, CF(1) - the catalytic core - and CF(0) - the membrane proton channel. CF(1) has five subunits: alpha(3), beta(3), gamma(1), delta(1), epsilon(1). CF(0) has three main subunits: a, b and c.

It is found in the cell membrane. Produces ATP from ADP in the presence of a proton gradient across the membrane. The gamma chain is believed to be important in regulating ATPase activity and the flow of protons through the CF(0) complex. This is ATP synthase gamma chain from Mycobacterium ulcerans (strain Agy99).